Here is a 537-residue protein sequence, read N- to C-terminus: Tyrosine-protein kinase Fyn (537 aa).

A lipid anchor (N-myristoyl glycine) is attached at Gly-2. S-palmitoyl cysteine attachment occurs at residues Cys-3 and Cys-6. Thr-12 is subject to Phosphothreonine; by PKC. The SH3 domain maps to Thr-82 to Ser-143. One can recognise an SH2 domain in the interval Trp-149–Cys-246. One can recognise a Protein kinase domain in the interval Leu-271–Phe-524. ATP is bound by residues Leu-277 to Val-285 and Lys-299. Asp-390 serves as the catalytic Proton acceptor. The residue at position 420 (Tyr-420) is a Phosphotyrosine; by autocatalysis. Tyr-531 is modified (phosphotyrosine).

It belongs to the protein kinase superfamily. Tyr protein kinase family. SRC subfamily. Associates through its SH3 domain, to the p85 subunit of phosphatidylinositol 3-kinase. Mn(2+) serves as cofactor.

It carries out the reaction L-tyrosyl-[protein] + ATP = O-phospho-L-tyrosyl-[protein] + ADP + H(+). Its activity is regulated as follows. Inhibited by phosphorylation of Tyr-531 by leukocyte common antigen and activated by dephosphorylation of this site. Functionally, tyrosine-protein kinase implicated in the control of cell growth. Plays a role in the regulation of intracellular calcium levels. Required in brain development and mature brain function with important roles in the regulation of axon growth, axon guidance, and neurite extension. Blocks axon outgrowth and attraction induced by ntn1 by phosphorylating its receptor ddc. The sequence is that of Tyrosine-protein kinase Fyn (fyn) from Xenopus laevis (African clawed frog).